The chain runs to 59 residues: Large ribosomal subunit protein uL30 (59 aa).

Belongs to the universal ribosomal protein uL30 family. Part of the 50S ribosomal subunit.

The protein is Large ribosomal subunit protein uL30 of Aliivibrio salmonicida (strain LFI1238) (Vibrio salmonicida (strain LFI1238)).